Consider the following 274-residue polypeptide: 2,3,4,5-tetrahydropyridine-2,6-dicarboxylate N-succinyltransferase (274 aa).

It belongs to the transferase hexapeptide repeat family.

Its subcellular location is the cytoplasm. It catalyses the reaction (S)-2,3,4,5-tetrahydrodipicolinate + succinyl-CoA + H2O = (S)-2-succinylamino-6-oxoheptanedioate + CoA. It functions in the pathway amino-acid biosynthesis; L-lysine biosynthesis via DAP pathway; LL-2,6-diaminopimelate from (S)-tetrahydrodipicolinate (succinylase route): step 1/3. The chain is 2,3,4,5-tetrahydropyridine-2,6-dicarboxylate N-succinyltransferase from Salmonella agona (strain SL483).